The primary structure comprises 163 residues: Putative pre-16S rRNA nuclease (163 aa).

The protein belongs to the YqgF nuclease family.

It localises to the cytoplasm. In terms of biological role, could be a nuclease involved in processing of the 5'-end of pre-16S rRNA. In Chlamydia caviae (strain ATCC VR-813 / DSM 19441 / 03DC25 / GPIC) (Chlamydophila caviae), this protein is Putative pre-16S rRNA nuclease.